A 162-amino-acid chain; its full sequence is Large ribosomal subunit protein uL10 (162 aa).

The protein belongs to the universal ribosomal protein uL10 family. As to quaternary structure, part of the ribosomal stalk of the 50S ribosomal subunit. The N-terminus interacts with L11 and the large rRNA to form the base of the stalk. The C-terminus forms an elongated spine to which L12 dimers bind in a sequential fashion forming a multimeric L10(L12)X complex.

In terms of biological role, forms part of the ribosomal stalk, playing a central role in the interaction of the ribosome with GTP-bound translation factors. The polypeptide is Large ribosomal subunit protein uL10 (Borrelia garinii subsp. bavariensis (strain ATCC BAA-2496 / DSM 23469 / PBi) (Borreliella bavariensis)).